Here is a 321-residue protein sequence, read N- to C-terminus: Ubiquinone biosynthesis protein COQ4, mitochondrial (321 aa).

Histidine 205, aspartate 206, histidine 209, and glutamate 221 together coordinate Zn(2+).

Belongs to the COQ4 family. In terms of assembly, component of a multi-subunit COQ enzyme complex, composed of at least COQ3, COQ4, COQ5, COQ6, COQ7 and COQ9. Zn(2+) is required as a cofactor.

It localises to the mitochondrion inner membrane. The enzyme catalyses a 4-hydroxy-3-methoxy-5-(all-trans-polyprenyl)benzoate + H(+) = a 2-methoxy-6-(all-trans-polyprenyl)phenol + CO2. Its pathway is cofactor biosynthesis; ubiquinone biosynthesis. In terms of biological role, lyase that catalyzes the C1-decarboxylation of 4-hydroxy-3-methoxy-5-(all-trans-polyprenyl)benzoic acid into 2-methoxy-6-(all-trans-polyprenyl)phenol during ubiquinone biosynthesis. This chain is Ubiquinone biosynthesis protein COQ4, mitochondrial, found in Candida tropicalis (strain ATCC MYA-3404 / T1) (Yeast).